The sequence spans 627 residues: 1-deoxy-D-xylulose-5-phosphate synthase (627 aa).

Thiamine diphosphate contacts are provided by residues H80 and G121–S123. D152 is a binding site for Mg(2+). Thiamine diphosphate is bound by residues G153–A154, N181, Y288, and E370. N181 is a binding site for Mg(2+).

The protein belongs to the transketolase family. DXPS subfamily. In terms of assembly, homodimer. Mg(2+) is required as a cofactor. Thiamine diphosphate serves as cofactor.

It carries out the reaction D-glyceraldehyde 3-phosphate + pyruvate + H(+) = 1-deoxy-D-xylulose 5-phosphate + CO2. Its pathway is metabolic intermediate biosynthesis; 1-deoxy-D-xylulose 5-phosphate biosynthesis; 1-deoxy-D-xylulose 5-phosphate from D-glyceraldehyde 3-phosphate and pyruvate: step 1/1. Catalyzes the acyloin condensation reaction between C atoms 2 and 3 of pyruvate and glyceraldehyde 3-phosphate to yield 1-deoxy-D-xylulose-5-phosphate (DXP). The chain is 1-deoxy-D-xylulose-5-phosphate synthase from Aliivibrio salmonicida (strain LFI1238) (Vibrio salmonicida (strain LFI1238)).